The sequence spans 276 residues: Undecaprenyl-diphosphatase 2 (276 aa).

8 helical membrane passes run 1–21 (MSLW…LFPV), 44–64 (QLLP…LWYF), 87–107 (GHLM…GLLL), 114–134 (VFHD…LLWL), 150–170 (MTFK…IPGF), 190–210 (AAEF…VLEL), 222–242 (DALL…RFLM), and 251–271 (LASF…WFML).

This sequence belongs to the UppP family.

The protein localises to the cell inner membrane. It carries out the reaction di-trans,octa-cis-undecaprenyl diphosphate + H2O = di-trans,octa-cis-undecaprenyl phosphate + phosphate + H(+). Catalyzes the dephosphorylation of undecaprenyl diphosphate (UPP). Confers resistance to bacitracin. This is Undecaprenyl-diphosphatase 2 from Burkholderia lata (strain ATCC 17760 / DSM 23089 / LMG 22485 / NCIMB 9086 / R18194 / 383).